The chain runs to 120 residues: Large ribosomal subunit protein uL22 (120 aa).

Positions 1-20 (MFVNRRYTARGKNLPSSPKK) are disordered.

Belongs to the universal ribosomal protein uL22 family. Part of the 50S ribosomal subunit.

In terms of biological role, this protein binds specifically to 23S rRNA; its binding is stimulated by other ribosomal proteins, e.g. L4, L17, and L20. It is important during the early stages of 50S assembly. It makes multiple contacts with different domains of the 23S rRNA in the assembled 50S subunit and ribosome. Functionally, the globular domain of the protein is located near the polypeptide exit tunnel on the outside of the subunit, while an extended beta-hairpin is found that lines the wall of the exit tunnel in the center of the 70S ribosome. This chain is Large ribosomal subunit protein uL22, found in Borrelia turicatae (strain 91E135).